Reading from the N-terminus, the 384-residue chain is Calreticulin-3 (384 aa).

The first 19 residues, 1–19 (MAAARVPLWAICVRRVALA), serve as a signal peptide directing secretion. The interval 20-197 (TVYFQEEFLD…GQSIESGSIE (178 aa)) is N-domain. N-linked (GlcNAc...) asparagine glycosylation is present at Asn42. An intrachain disulfide couples Cys105 to Cys137. Positions 109, 111, 128, and 135 each coordinate an alpha-D-glucoside. Repeat copies occupy residues 191–202 (IESGSIEYDWQL), 209–220 (EKASAEAEGWDQ), 222–231 (AKDKSQDWEK), 235–246 (DASASKPSDWKG), 250–260 (GDWQAAMLQKP), 264–272 (DGLKPEGID), and 274–284 (DVWLHQKMKNS). The interval 191 to 246 (IESGSIEYDWQLTSLKKMEKASAEAEGWDQAAKDKSQDWEKHFLDASASKPSDWKG) is 4 X approximate repeats. A P-domain region spans residues 198–294 (YDWQLTSLKK…YLTEYDLSEF (97 aa)). The segment at 250–284 (GDWQAAMLQKPPYQDGLKPEGIDKDVWLHQKMKNS) is 3 X approximate repeats. Residues 295 to 384 (ENIGAVGLEL…FKGFHRRNEF (90 aa)) are C-domain. Residue Glu303 participates in an alpha-D-glucoside binding. Positions 381–384 (RNEF) match the Prevents secretion from ER motif.

The protein belongs to the calreticulin family. As to quaternary structure, component of an EIF2 complex at least composed of CELF1/CUGBP1, CALR, CALR3, EIF2S1, EIF2S2, HSP90B1 and HSPA5.

It localises to the endoplasmic reticulum lumen. During spermatogenesis, may act as a lectin-independent chaperone for specific client proteins such as ADAM3. CALR3 capacity for calcium-binding may be absent or much lower than that of CALR. Required for sperm fertility. In Bos taurus (Bovine), this protein is Calreticulin-3 (CALR3).